A 242-amino-acid chain; its full sequence is MAGHSKWANIKHKKAAADAKRGKIWTRLIKEIQVAARLGGGDANSNPRLRLAVDKAADANMPKDNVKRAIDRGVGGADGANYEEIRYEGYGISGAAIIVDTLTDNRTRTVAEVRHAFSKFGGNMGTDGSVAFMFDHVGQFLFAPGTSEDALMEAALEAGADDVSTNDDGSIEVLCDWQAFSAVKDALEAAGFKAELAEVTMKPQNEVEFTGDDAAKMQKLLDALENLDDVQEVYTNAVIVEE.

This sequence belongs to the TACO1 family.

The protein localises to the cytoplasm. This Burkholderia ambifaria (strain MC40-6) protein is Probable transcriptional regulatory protein BamMC406_2210.